Reading from the N-terminus, the 138-residue chain is ATP synthase epsilon chain (138 aa).

Belongs to the ATPase epsilon chain family. In terms of assembly, F-type ATPases have 2 components, CF(1) - the catalytic core - and CF(0) - the membrane proton channel. CF(1) has five subunits: alpha(3), beta(3), gamma(1), delta(1), epsilon(1). CF(0) has three main subunits: a, b and c.

Its subcellular location is the cell inner membrane. Functionally, produces ATP from ADP in the presence of a proton gradient across the membrane. In Psychrobacter cryohalolentis (strain ATCC BAA-1226 / DSM 17306 / VKM B-2378 / K5), this protein is ATP synthase epsilon chain.